We begin with the raw amino-acid sequence, 275 residues long: MATYFVGDLQGCYDELQLLLERVDFNPTQDKLYLVGDLVARGDKSLECLRFVKSLGNAAQTVLGNHDLHLIATALDIKKVKPRDRVDAIFNAPDFDEQIHWLRHQPLLVHSEELNFLMSHAGISPDWDLKTAKSCAAEVEQILQHGDFHYLIENMYSEQPDRWSPDLQGLARHRYIINAFTRMRFCYLDHRFDFACKSPLKDAPAELTPWFNLDNPLYKQIPIVFGHWASLVDEPTPKGIYALDTGCVWNNRMTMLRWEDKQFFTQSAVKNYSDF.

It belongs to the Ap4A hydrolase family.

It carries out the reaction P(1),P(4)-bis(5'-adenosyl) tetraphosphate + H2O = 2 ADP + 2 H(+). Functionally, hydrolyzes diadenosine 5',5'''-P1,P4-tetraphosphate to yield ADP. The chain is Bis(5'-nucleosyl)-tetraphosphatase, symmetrical from Haemophilus influenzae (strain PittEE).